Reading from the N-terminus, the 35-residue chain is Photosystem II reaction center protein T (35 aa).

A helical membrane pass occupies residues 3–23; that stretch reads ALVYTFLLVSTLGIIFFAIFF.

Belongs to the PsbT family. PSII is composed of 1 copy each of membrane proteins PsbA, PsbB, PsbC, PsbD, PsbE, PsbF, PsbH, PsbI, PsbJ, PsbK, PsbL, PsbM, PsbT, PsbY, PsbZ, Psb30/Ycf12, at least 3 peripheral proteins of the oxygen-evolving complex and a large number of cofactors. It forms dimeric complexes.

It localises to the plastid. The protein localises to the chloroplast thylakoid membrane. Its function is as follows. Found at the monomer-monomer interface of the photosystem II (PS II) dimer, plays a role in assembly and dimerization of PSII. PSII is a light-driven water plastoquinone oxidoreductase, using light energy to abstract electrons from H(2)O, generating a proton gradient subsequently used for ATP formation. The sequence is that of Photosystem II reaction center protein T from Drimys granadensis.